Here is a 369-residue protein sequence, read N- to C-terminus: Chaperone protein DnaJ (369 aa).

Positions Asp-7–Gly-73 constitute a J domain. The CR-type zinc-finger motif lies at Gly-143 to Lys-225. 8 residues coordinate Zn(2+): Cys-156, Cys-159, Cys-173, Cys-176, Cys-199, Cys-202, Cys-213, and Cys-216. CXXCXGXG motif repeat units follow at residues Cys-156 to Gly-163, Cys-173 to Gly-180, Cys-199 to Gly-206, and Cys-213 to Gly-220.

The protein belongs to the DnaJ family. In terms of assembly, homodimer. Zn(2+) serves as cofactor.

It localises to the cytoplasm. Participates actively in the response to hyperosmotic and heat shock by preventing the aggregation of stress-denatured proteins and by disaggregating proteins, also in an autonomous, DnaK-independent fashion. Unfolded proteins bind initially to DnaJ; upon interaction with the DnaJ-bound protein, DnaK hydrolyzes its bound ATP, resulting in the formation of a stable complex. GrpE releases ADP from DnaK; ATP binding to DnaK triggers the release of the substrate protein, thus completing the reaction cycle. Several rounds of ATP-dependent interactions between DnaJ, DnaK and GrpE are required for fully efficient folding. Also involved, together with DnaK and GrpE, in the DNA replication of plasmids through activation of initiation proteins. The polypeptide is Chaperone protein DnaJ (Thermotoga maritima (strain ATCC 43589 / DSM 3109 / JCM 10099 / NBRC 100826 / MSB8)).